Here is a 297-residue protein sequence, read N- to C-terminus: Calponin-1 (297 aa).

A Calponin-homology (CH) domain is found at 28 to 131; that stretch reads HQREQELREW…STLLALASMA (104 aa). At Ser48 the chain carries Phosphoserine. 3 Calponin-like repeats span residues 164-189, 204-229, and 243-268; these read IGLQ…RHLY, ISLQ…RQIF, and VSLQ…RQVY. Position 170 is a phosphothreonine; by ROCK2 (Thr170). Position 175 is a phosphoserine; by ROCK2 (Ser175). Thr180 and Thr184 each carry phosphothreonine; by ROCK2. Thr259 is subject to Phosphothreonine; by ROCK2.

This sequence belongs to the calponin family. In terms of assembly, part of cGMP kinase signaling complex at least composed of ACTA2/alpha-actin, CNN1/calponin H1, PLN/phospholamban, PRKG1 and ITPR1. In terms of tissue distribution, smooth muscle, and tissues containing significant amounts of smooth muscle.

Thin filament-associated protein that is implicated in the regulation and modulation of smooth muscle contraction. It is capable of binding to actin, calmodulin and tropomyosin. The interaction of calponin with actin inhibits the actomyosin Mg-ATPase activity. The chain is Calponin-1 (Cnn1) from Rattus norvegicus (Rat).